The primary structure comprises 143 residues: Transcriptional regulator MraZ (143 aa).

SpoVT-AbrB domains are found at residues 5 to 47 (EYSH…PQKE) and 76 to 119 (AAEC…SQEL).

This sequence belongs to the MraZ family. Forms oligomers.

The protein localises to the cytoplasm. Its subcellular location is the nucleoid. The protein is Transcriptional regulator MraZ of Carboxydothermus hydrogenoformans (strain ATCC BAA-161 / DSM 6008 / Z-2901).